The following is a 637-amino-acid chain: Chaperone protein HtpG (637 aa).

The interval 1 to 345 is a; substrate-binding; it reads MSQQETHGFQ…SNDLPLNVSR (345 aa). A b region spans residues 346–562; sequence EILQDNHITK…EGEMSSQMIK (217 aa). Residues 563 to 637 are c; that stretch reads LMQAAGQPVP…MNQMLLANLK (75 aa).

Belongs to the heat shock protein 90 family. In terms of assembly, homodimer.

It is found in the cytoplasm. Its function is as follows. Molecular chaperone. Has ATPase activity. In Shewanella sp. (strain MR-4), this protein is Chaperone protein HtpG.